The sequence spans 363 residues: UV excision repair protein RAD23 homolog A (363 aa).

Residues 1–81 (MAVTITLKTL…VVVMVTKTKA (81 aa)) form the Ubiquitin-like domain. The segment at 81 to 160 (AGQGTSAPPE…EDAASTLVTG (80 aa)) is disordered. Positions 85–103 (TSAPPEASPTAAPESSTSF) are enriched in low complexity. Residue Lys122 forms a Glycyl lysine isopeptide (Lys-Gly) (interchain with G-Cter in ubiquitin) linkage. Phosphoserine is present on residues Ser123, Ser128, Ser133, Ser136, and Ser138. Low complexity predominate over residues 126–147 (EESAPTTSPESVSGSVPSSGSS). Residues 161–201 (SEYETMLTEIMSMGYERERVVAALRASYNNPHRAVEYLLTG) form the UBA 1 domain. Residues 203-227 (PGSPEPEHGSVQESQVSEQPATEAA) form a disordered region. At Ser205 the chain carries Phosphoserine. The span at 213 to 222 (VQESQVSEQP) shows a compositional bias: polar residues. A phosphoserine mark is found at Ser295 and Ser357. Residues 318–358 (PQEKEAIERLKALGFPESLVIQAYFACEKNENLAANFLLSQ) form the UBA 2 domain. The HIV-1 vpr binding stretch occupies residues 319–363 (QEKEAIERLKALGFPESLVIQAYFACEKNENLAANFLLSQNFDDE).

Belongs to the RAD23 family. Interacts with XPC; the interaction is suggesting the existence of a functional equivalent variant XPC complex. Interacts with PSMD4 and PSMC5. Interacts with ATXN3. Interacts with UBQLN2. In terms of assembly, (Microbial infection) Interacts with HIV-1 Vpr.

The protein localises to the nucleus. Multiubiquitin chain receptor involved in modulation of proteasomal degradation. Binds to 'Lys-48'-linked polyubiquitin chains in a length-dependent manner and with a lower affinity to 'Lys-63'-linked polyubiquitin chains. Proposed to be capable to bind simultaneously to the 26S proteasome and to polyubiquitinated substrates and to deliver ubiquitinated proteins to the proteasome. Its function is as follows. Involved in nucleotide excision repair and is thought to be functional equivalent for RAD23B in global genome nucleotide excision repair (GG-NER) by association with XPC. In vitro, the XPC:RAD23A dimer has NER activity. Can stabilize XPC. Functionally, (Microbial infection) Involved in Vpr-dependent replication of HIV-1 in non-proliferating cells and primary macrophages. Required for the association of HIV-1 Vpr with the host proteasome. In Homo sapiens (Human), this protein is UV excision repair protein RAD23 homolog A (RAD23A).